Reading from the N-terminus, the 61-residue chain is Bactericidin B-5P (61 aa).

Positions 1 to 22 are cleaved as a signal peptide; sequence MNFSRVLFFVFACLSAFAMASA. Residues 23 to 24 constitute a propeptide, removed by a dipeptidylpeptidase; sequence AP. Position 60 is a glycine amide (G60).

Belongs to the cecropin family.

It is found in the secreted. Its function is as follows. Cecropins have lytic and antibacterial activity against several Gram-positive and Gram-negative bacteria. This is Bactericidin B-5P from Manduca sexta (Tobacco hawkmoth).